The chain runs to 200 residues: Holliday junction branch migration complex subunit RuvA (200 aa).

The segment at 1–63 is domain I; it reads MYAYVKGKLT…EDAQLLYGFS (63 aa). The interval 64–142 is domain II; that stretch reads SEEEKDMFLS…ITEEDSDSLL (79 aa). The flexible linker stretch occupies residues 143–149; the sequence is QVDATST. Positions 150 to 200 are domain III; it reads VQDQFVQEAMLALEALGYSKRELAKVEKTLNKNKYDSVDEAVKAGLQLVVS.

Belongs to the RuvA family. In terms of assembly, homotetramer. Forms an RuvA(8)-RuvB(12)-Holliday junction (HJ) complex. HJ DNA is sandwiched between 2 RuvA tetramers; dsDNA enters through RuvA and exits via RuvB. An RuvB hexamer assembles on each DNA strand where it exits the tetramer. Each RuvB hexamer is contacted by two RuvA subunits (via domain III) on 2 adjacent RuvB subunits; this complex drives branch migration. In the full resolvosome a probable DNA-RuvA(4)-RuvB(12)-RuvC(2) complex forms which resolves the HJ.

The protein localises to the cytoplasm. Functionally, the RuvA-RuvB-RuvC complex processes Holliday junction (HJ) DNA during genetic recombination and DNA repair, while the RuvA-RuvB complex plays an important role in the rescue of blocked DNA replication forks via replication fork reversal (RFR). RuvA specifically binds to HJ cruciform DNA, conferring on it an open structure. The RuvB hexamer acts as an ATP-dependent pump, pulling dsDNA into and through the RuvAB complex. HJ branch migration allows RuvC to scan DNA until it finds its consensus sequence, where it cleaves and resolves the cruciform DNA. In Staphylococcus aureus (strain Mu3 / ATCC 700698), this protein is Holliday junction branch migration complex subunit RuvA.